The following is a 645-amino-acid chain: Acetyl-coenzyme A synthetase (645 aa).

CoA is bound by residues 190–193 (RGGR) and T308. ATP contacts are provided by residues 384-386 (GEP), 408-413 (DTWWQT), D497, and R512. S520 serves as a coordination point for CoA. An ATP-binding site is contributed by R523. Mg(2+) is bound by residues V534, H536, and V539. K606 carries the N6-acetyllysine modification.

The protein belongs to the ATP-dependent AMP-binding enzyme family. The cofactor is Mg(2+). In terms of processing, acetylated. Deacetylation by the SIR2-homolog deacetylase activates the enzyme.

It carries out the reaction acetate + ATP + CoA = acetyl-CoA + AMP + diphosphate. Its function is as follows. Catalyzes the conversion of acetate into acetyl-CoA (AcCoA), an essential intermediate at the junction of anabolic and catabolic pathways. AcsA undergoes a two-step reaction. In the first half reaction, AcsA combines acetate with ATP to form acetyl-adenylate (AcAMP) intermediate. In the second half reaction, it can then transfer the acetyl group from AcAMP to the sulfhydryl group of CoA, forming the product AcCoA. This is Acetyl-coenzyme A synthetase from Saccharophagus degradans (strain 2-40 / ATCC 43961 / DSM 17024).